A 253-amino-acid chain; its full sequence is RNA polymerase sigma-F factor (253 aa).

The Polymerase core binding signature appears at 61 to 74 (DLFQIGCIGLLKSV). The H-T-H motif DNA-binding region spans 221–240 (QSEVAARLGISQVQVSRLEK).

This sequence belongs to the sigma-70 factor family.

In terms of biological role, sigma factors are initiation factors that promote the attachment of RNA polymerase to specific initiation sites and are then released. This sigma factor is responsible for the expression of sporulation specific genes. It is responsible for directing gene expression in the forespore compartment of developing cells of Bacillus. In Priestia megaterium (Bacillus megaterium), this protein is RNA polymerase sigma-F factor (sigF).